The primary structure comprises 902 residues: Respiratory nitrate reductase alpha chain (902 aa).

[4Fe-4S] cluster is bound by residues histidine 29, cysteine 33, and cysteine 37.

It belongs to the prokaryotic molybdopterin-containing oxidoreductase family. In terms of assembly, heterotrimer composed of an alpha, a beta and a gamma chain. Alpha and beta are catalytic chains; gamma chains are involved in binding the enzyme complex to the cytoplasmic membrane. [4Fe-4S] cluster is required as a cofactor. Requires Mo-bis(molybdopterin guanine dinucleotide) as cofactor.

Its subcellular location is the cell membrane. It is found in the cytoplasm. It carries out the reaction nitrate + a quinol = a quinone + nitrite + H2O. Its activity is regulated as follows. Inhibited by micromolar concentrations of azide. Its function is as follows. The nitrate reductase enzyme complex allows Bradyrhizobium sp. USDA 3045 to use nitrate as an electron acceptor during anaerobic growth. The alpha chain is the actual site of nitrate reduction. The sequence is that of Respiratory nitrate reductase alpha chain (narG) from Bradyrhizobium sp.